A 753-amino-acid chain; its full sequence is 5-methyltetrahydropteroyltriglutamate--homocysteine methyltransferase (753 aa).

5-methyltetrahydropteroyltri-L-glutamate-binding positions include 17–20 (RELK) and lysine 117. L-homocysteine-binding positions include 431–433 (IGS) and glutamate 484. L-methionine-binding positions include 431–433 (IGS) and glutamate 484. Residues 515–516 (RC) and tryptophan 561 each bind 5-methyltetrahydropteroyltri-L-glutamate. Aspartate 599 is a binding site for L-homocysteine. Position 599 (aspartate 599) interacts with L-methionine. Glutamate 605 is a binding site for 5-methyltetrahydropteroyltri-L-glutamate. Histidine 641, cysteine 643, and glutamate 665 together coordinate Zn(2+). Histidine 694 functions as the Proton donor in the catalytic mechanism. Zn(2+) is bound at residue cysteine 726.

Belongs to the vitamin-B12 independent methionine synthase family. Zn(2+) serves as cofactor.

It catalyses the reaction 5-methyltetrahydropteroyltri-L-glutamate + L-homocysteine = tetrahydropteroyltri-L-glutamate + L-methionine. It functions in the pathway amino-acid biosynthesis; L-methionine biosynthesis via de novo pathway; L-methionine from L-homocysteine (MetE route): step 1/1. In terms of biological role, catalyzes the transfer of a methyl group from 5-methyltetrahydrofolate to homocysteine resulting in methionine formation. This chain is 5-methyltetrahydropteroyltriglutamate--homocysteine methyltransferase, found in Escherichia coli O157:H7.